Consider the following 177-residue polypeptide: Sec-independent protein translocase protein TatB (177 aa).

A helical membrane pass occupies residues 1–21 (MFDFAWSEIAVIGVVALVVIG). Positions 136–146 (REKTVSSETAR) are enriched in basic and acidic residues. A disordered region spans residues 136-177 (REKTVSSETARRAATAPAFIPPGEAFRSARRAPAFIPPADQG).

Belongs to the TatB family. In terms of assembly, the Tat system comprises two distinct complexes: a TatABC complex, containing multiple copies of TatA, TatB and TatC subunits, and a separate TatA complex, containing only TatA subunits. Substrates initially bind to the TatABC complex, which probably triggers association of the separate TatA complex to form the active translocon.

The protein resides in the cell inner membrane. Its function is as follows. Part of the twin-arginine translocation (Tat) system that transports large folded proteins containing a characteristic twin-arginine motif in their signal peptide across membranes. Together with TatC, TatB is part of a receptor directly interacting with Tat signal peptides. TatB may form an oligomeric binding site that transiently accommodates folded Tat precursor proteins before their translocation. The sequence is that of Sec-independent protein translocase protein TatB from Granulibacter bethesdensis (strain ATCC BAA-1260 / CGDNIH1).